A 356-amino-acid chain; its full sequence is Tricetin 3',4',5'-O-trimethyltransferase (356 aa).

Substrate is bound at residue 123-129 (MNQDKVL). A substrate binding region spans residues 155 to 173 (AFEYHGTDPRFNRVFNEGM). Residues Gly201, Asp224, Asp244, Met245, and Lys258 each contribute to the S-adenosyl-L-methionine site. His262 acts as the Proton acceptor in catalysis.

Belongs to the class I-like SAM-binding methyltransferase superfamily. Cation-independent O-methyltransferase family. COMT subfamily. Homodimer. The monomer is fully active and dimerization is not required for sequential methylation. Expressed in roots, stems and leaves.

It catalyses the reaction tricetin + 3 S-adenosyl-L-methionine = 3',4',5'-O-trimethyltricetin + 3 S-adenosyl-L-homocysteine + 3 H(+). In terms of biological role, flavonoid B-ring-specific O-methyltransferase with a preference for flavones &gt; dihydroflavones &gt; flavonols that possess at least two B-ring hydroxyl groups. Active with tricetin, 5-hydroxyferulic acid, luteolin, quercitin, eriodictyol, quercetagetin, taxifolin, gossypetin and myricetin. No activity with naringenin, apigenin, kaempferol, 7,8-dihydroxy- or 5,7,8-trihydroxy flavones, chlorogenic acid, gallic acid or daphnetin. Catalyzes the sequential O-methylation of tricetin via 3'-O-methyltricetin, 3',5'-O-methyltricetin to 3',4',5'-O-trimethyltricetin. May also be involved in S lignin biosynthesis. The chain is Tricetin 3',4',5'-O-trimethyltransferase (OMT2) from Triticum aestivum (Wheat).